We begin with the raw amino-acid sequence, 291 residues long: Proteasomal ubiquitin receptor ADRM1 homolog rpn1301 (291 aa).

Positions 1–114 constitute a Pru domain; that stretch reads MSLITFKAGK…ERINSYIKDQ (114 aa). The interval 135–162 is disordered; it reads TVEQSEPIAQPTESSKESSEIGAPNSDE. One can recognise a DEUBAD domain in the interval 178–290; it reads AQAGFGGSTV…ARFVSRNNGS (113 aa).

It belongs to the ADRM1 family. Component of the 19S proteasome regulatory particle complex. The 2 S.pombe rpn13 homologs, rpn1301 and rpn1302 are present at a 0.2-1 ratio.

Its subcellular location is the cytoplasm. It localises to the nucleus. In terms of biological role, component of the 26S proteasome, a multiprotein complex involved in the ATP-dependent degradation of ubiquitinated proteins. This complex plays a key role in the maintenance of protein homeostasis by removing misfolded or damaged proteins, which could impair cellular functions, and by removing proteins whose functions are no longer required. Therefore, the proteasome participates in numerous cellular processes, including cell cycle progression, apoptosis, or DNA damage repair. Within the complex, functions as a proteasomal ubiquitin receptor. The sequence is that of Proteasomal ubiquitin receptor ADRM1 homolog rpn1301 (rpn1301) from Schizosaccharomyces pombe (strain 972 / ATCC 24843) (Fission yeast).